A 130-amino-acid chain; its full sequence is Small ribosomal subunit protein uS8 (130 aa).

Belongs to the universal ribosomal protein uS8 family. As to quaternary structure, part of the 30S ribosomal subunit. Contacts proteins S5 and S12.

One of the primary rRNA binding proteins, it binds directly to 16S rRNA central domain where it helps coordinate assembly of the platform of the 30S subunit. In Aliivibrio fischeri (strain MJ11) (Vibrio fischeri), this protein is Small ribosomal subunit protein uS8.